A 155-amino-acid chain; its full sequence is Probable Brix domain-containing ribosomal biogenesis protein (155 aa).

The 155-residue stretch at 1 to 155 (MLITSSRKPS…KNYRKMVMSE (155 aa)) folds into the Brix domain.

Functionally, probably involved in the biogenesis of the ribosome. The sequence is that of Probable Brix domain-containing ribosomal biogenesis protein from Methanococcoides burtonii (strain DSM 6242 / NBRC 107633 / OCM 468 / ACE-M).